The following is a 159-amino-acid chain: SsrA-binding protein (159 aa).

Belongs to the SmpB family.

It is found in the cytoplasm. Functionally, required for rescue of stalled ribosomes mediated by trans-translation. Binds to transfer-messenger RNA (tmRNA), required for stable association of tmRNA with ribosomes. tmRNA and SmpB together mimic tRNA shape, replacing the anticodon stem-loop with SmpB. tmRNA is encoded by the ssrA gene; the 2 termini fold to resemble tRNA(Ala) and it encodes a 'tag peptide', a short internal open reading frame. During trans-translation Ala-aminoacylated tmRNA acts like a tRNA, entering the A-site of stalled ribosomes, displacing the stalled mRNA. The ribosome then switches to translate the ORF on the tmRNA; the nascent peptide is terminated with the 'tag peptide' encoded by the tmRNA and targeted for degradation. The ribosome is freed to recommence translation, which seems to be the essential function of trans-translation. The sequence is that of SsrA-binding protein from Coxiella burnetii (strain CbuG_Q212) (Coxiella burnetii (strain Q212)).